Here is a 776-residue protein sequence, read N- to C-terminus: Isoamylase (776 aa).

A signal peptide spans 1-26 (MKCPKILAALLGCAVLAGVPAMPAHA). The Ca(2+) site is built by Asp-154, Glu-255, Thr-256, Asn-258, and Asp-285. The Nucleophile role is filled by Asp-401. Cys-410 and Cys-422 are disulfide-bonded. Glu-461 functions as the Proton donor in the catalytic mechanism. Disulfide bonds link Cys-546–Cys-616 and Cys-738–Cys-766.

Belongs to the glycosyl hydrolase 13 family. As to quaternary structure, monomer. Requires Ca(2+) as cofactor.

It catalyses the reaction Hydrolysis of (1-&gt;6)-alpha-D-glucosidic branch linkages in glycogen, amylopectin and their beta-limit dextrins.. The polypeptide is Isoamylase (iam) (Pseudomonas sp. (strain SMP1)).